Here is a 384-residue protein sequence, read N- to C-terminus: 8-amino-7-oxononanoate synthase (384 aa).

Arginine 21 is a binding site for substrate. 108–109 contacts pyridoxal 5'-phosphate; the sequence is GF. Residue histidine 133 coordinates substrate. The pyridoxal 5'-phosphate site is built by serine 179, histidine 207, and threonine 233. Lysine 236 bears the N6-(pyridoxal phosphate)lysine mark. Threonine 352 is a substrate binding site.

The protein belongs to the class-II pyridoxal-phosphate-dependent aminotransferase family. BioF subfamily. As to quaternary structure, homodimer. Pyridoxal 5'-phosphate serves as cofactor.

The catalysed reaction is 6-carboxyhexanoyl-[ACP] + L-alanine + H(+) = (8S)-8-amino-7-oxononanoate + holo-[ACP] + CO2. The protein operates within cofactor biosynthesis; biotin biosynthesis. In terms of biological role, catalyzes the decarboxylative condensation of pimeloyl-[acyl-carrier protein] and L-alanine to produce 8-amino-7-oxononanoate (AON), [acyl-carrier protein], and carbon dioxide. The sequence is that of 8-amino-7-oxononanoate synthase from Escherichia coli (strain SE11).